A 515-amino-acid polypeptide reads, in one-letter code: 2-isopropylmalate synthase (515 aa).

The region spanning 5-267 is the Pyruvate carboxyltransferase domain; the sequence is VIIFDTTLRD…HTSLKNDEIH (263 aa). Residues D14, H202, H204, and N238 each coordinate Mn(2+). The segment at 392 to 515 is regulatory domain; the sequence is KLNYLSVQSG…EIKQNKITTV (124 aa).

The protein belongs to the alpha-IPM synthase/homocitrate synthase family. LeuA type 1 subfamily. As to quaternary structure, homodimer. The cofactor is Mn(2+).

Its subcellular location is the cytoplasm. It catalyses the reaction 3-methyl-2-oxobutanoate + acetyl-CoA + H2O = (2S)-2-isopropylmalate + CoA + H(+). It functions in the pathway amino-acid biosynthesis; L-leucine biosynthesis; L-leucine from 3-methyl-2-oxobutanoate: step 1/4. Functionally, catalyzes the condensation of the acetyl group of acetyl-CoA with 3-methyl-2-oxobutanoate (2-ketoisovalerate) to form 3-carboxy-3-hydroxy-4-methylpentanoate (2-isopropylmalate). The protein is 2-isopropylmalate synthase of Aliivibrio salmonicida (strain LFI1238) (Vibrio salmonicida (strain LFI1238)).